We begin with the raw amino-acid sequence, 441 residues long: Acidic phosphoprotein (441 aa).

A signal peptide (or 24) is located at residues 1–15 (MKAISLGLISSIIFS). Residues Asn-21 and Asn-112 are each glycosylated (N-linked (GlcNAc...) asparagine). Tandem repeats lie at residues 186–193 (EEDPYLLQ), 194–201 (EEDALSLM), 202–209 (EYDAETLN), 210–217 (EGDAETLN), 218–225 (EGDAETLN), 226–233 (EYDAGTLN), 234–241 (EEDAGTTN), 242–249 (EAGEGTTN), 250–257 (EEGEGAAN), 258–265 (EYDAETLN), 266–273 (EYDADTLN), 274–281 (EYDAGTLN), 282–289 (EYDAGTLN), 290–297 (EEEGSTTN), 298–305 (EAGEGTSN), 306–313 (EAGEGTAN), 353–360 (KGNENEGE), and 361–368 (QKGNENEG). The interval 186 to 313 (EEDPYLLQEE…SNEAGEGTAN (128 aa)) is 16 X 8 AA tandem repeats. Positions 232–416 (LNEEDAGTTN…EKEKKKEKKV (185 aa)) are disordered. Residues 238-247 (GTTNEAGEGT) show a composition bias toward low complexity. The span at 248–273 (TNEEGEGAANEYDAETLNEYDADTLN) shows a compositional bias: acidic residues. The span at 294–306 (STTNEAGEGTSNE) shows a compositional bias: polar residues. Residues 312–332 (ANDDEELDEEVASIFDDDEHA) are compositionally biased toward acidic residues. Residues 349–371 (ENVKKGNENEGEQKGNENEGEQK) show a composition bias toward basic and acidic residues. Positions 353 to 370 (KGNENEGEQKGNENEGEQ) are 2 X 9 AA tandem repeats. Positions 372-415 (GKKKKAKEKSKKKVKNKPTMTTKKKKKKEKKKKKKEKEKKKEKK) are enriched in basic residues.

It is found in the cell membrane. In terms of biological role, during infection, this phosphoprotein probably modulates the structure of the red cell membrane to the advantage of the parasite, although its precise function is not known. This Plasmodium chabaudi protein is Acidic phosphoprotein (PCEMA1).